The sequence spans 422 residues: uncharacterized protein (422 aa).

Disordered stretches follow at residues 1-21, 158-218, and 246-271; these read MRDN…TTYD, TAKS…TEQV, and DFGT…PWLT. Polar residues predominate over residues 11–21; sequence AGSNTQQTTYD. Low complexity predominate over residues 170 to 199; that stretch reads SKSSNGSSSTSTTQRGGSSNENKVKALQVA. Composition is skewed to polar residues over residues 205-216 and 250-261; these read GSQGNSGDQGTE and APSSSGSGTQDG. The span at 262 to 271 shows a compositional bias: low complexity; the sequence is TPTPWTPWLT.

It belongs to the adhesin P1 family.

This is an uncharacterized protein from Mycoplasma pneumoniae (strain ATCC 29342 / M129 / Subtype 1) (Mycoplasmoides pneumoniae).